The following is a 110-amino-acid chain: Flagellar hook-basal body complex protein FliE (110 aa).

The protein belongs to the FliE family.

It localises to the bacterial flagellum basal body. The polypeptide is Flagellar hook-basal body complex protein FliE (Pseudomonas putida (strain W619)).